We begin with the raw amino-acid sequence, 361 residues long: Histidinol-phosphate aminotransferase (361 aa).

Position 220 is an N6-(pyridoxal phosphate)lysine (K220).

The protein belongs to the class-II pyridoxal-phosphate-dependent aminotransferase family. Histidinol-phosphate aminotransferase subfamily. In terms of assembly, homodimer. Pyridoxal 5'-phosphate is required as a cofactor.

It carries out the reaction L-histidinol phosphate + 2-oxoglutarate = 3-(imidazol-4-yl)-2-oxopropyl phosphate + L-glutamate. It functions in the pathway amino-acid biosynthesis; L-histidine biosynthesis; L-histidine from 5-phospho-alpha-D-ribose 1-diphosphate: step 7/9. The chain is Histidinol-phosphate aminotransferase from Syntrophus aciditrophicus (strain SB).